The following is a 439-amino-acid chain: uncharacterized protein (439 aa).

CBS domains lie at 195–254 (LTPA…SIEK) and 256–314 (MTKN…KQPQ).

This is an uncharacterized protein from Bacillus subtilis (strain 168).